Here is a 76-residue protein sequence, read N- to C-terminus: Small, acid-soluble spore protein Tlp (76 aa).

3 stretches are compositionally biased toward basic and acidic residues: residues 1–15 (MAKR…ERIE), 26–38 (DEAR…HSEE), and 46–76 (EIEQ…KNNS). A disordered region spans residues 1–76 (MAKRDDRSNN…DEVNDQKNNS (76 aa)).

Belongs to the Tlp family.

The protein localises to the spore core. This Shouchella clausii (strain KSM-K16) (Alkalihalobacillus clausii) protein is Small, acid-soluble spore protein Tlp.